The chain runs to 336 residues: UbiA prenyltransferase domain-containing protein 1 (336 aa).

N-acetylalanine is present on Ala2. The next 8 membrane-spanning stretches (helical) occupy residues 81–101 (LLLG…LVNT), 132–152 (FGVF…YLSA), 158–178 (LALI…GIGF), 186–206 (LVIL…VQVG), 207–227 (SLAI…EAIL), 243–265 (IVTL…LLFV), 275–295 (THCS…FSLE), and 313–333 (LNLL…AGSL).

Belongs to the UbiA prenyltransferase family. Interacts with HMGCR and SOAT1.

Its subcellular location is the endoplasmic reticulum membrane. The protein resides in the golgi apparatus membrane. It is found in the mitochondrion membrane. It catalyses the reaction menadiol + (2E,6E,10E)-geranylgeranyl diphosphate = menaquinol-4 + diphosphate. The catalysed reaction is all-trans-decaprenyl diphosphate + 4-hydroxybenzoate = 4-hydroxy-3-(all-trans-decaprenyl)benzoate + diphosphate. It participates in quinol/quinone metabolism; menaquinone biosynthesis. It functions in the pathway cofactor biosynthesis; ubiquinone biosynthesis. In terms of biological role, prenyltransferase that mediates the formation of menaquinone-4 (MK-4) and coenzyme Q10. MK-4 is a vitamin K2 isoform required for endothelial cell development. Mediates the conversion of phylloquinone (PK) into MK-4, probably by cleaving the side chain of phylloquinone (PK) to release 2-methyl-1,4-naphthoquinone (menadione; K3) and then prenylating it with geranylgeranyl pyrophosphate (GGPP) to form MK-4. Also plays a role in cardiovascular development independently of MK-4 biosynthesis, by acting as a coenzyme Q10 biosynthetic enzyme: coenzyme Q10, also named ubiquinone, plays an important antioxidant role in the cardiovascular system. Mediates biosynthesis of coenzyme Q10 in the Golgi membrane, leading to protect cardiovascular tissues from NOS3/eNOS-dependent oxidative stress. The polypeptide is UbiA prenyltransferase domain-containing protein 1 (Ubiad1) (Mus musculus (Mouse)).